Here is a 279-residue protein sequence, read N- to C-terminus: Acetyl-coenzyme A carboxylase carboxyl transferase subunit beta (279 aa).

The region spanning Leu-23–Ser-279 is the CoA carboxyltransferase N-terminal domain. Cys-27, Cys-30, Cys-46, and Cys-49 together coordinate Zn(2+). The C4-type zinc-finger motif lies at Cys-27–Cys-49.

This sequence belongs to the AccD/PCCB family. Acetyl-CoA carboxylase is a heterohexamer composed of biotin carboxyl carrier protein (AccB), biotin carboxylase (AccC) and two subunits each of ACCase subunit alpha (AccA) and ACCase subunit beta (AccD). Requires Zn(2+) as cofactor.

The protein localises to the cytoplasm. The enzyme catalyses N(6)-carboxybiotinyl-L-lysyl-[protein] + acetyl-CoA = N(6)-biotinyl-L-lysyl-[protein] + malonyl-CoA. It functions in the pathway lipid metabolism; malonyl-CoA biosynthesis; malonyl-CoA from acetyl-CoA: step 1/1. Component of the acetyl coenzyme A carboxylase (ACC) complex. Biotin carboxylase (BC) catalyzes the carboxylation of biotin on its carrier protein (BCCP) and then the CO(2) group is transferred by the transcarboxylase to acetyl-CoA to form malonyl-CoA. The chain is Acetyl-coenzyme A carboxylase carboxyl transferase subunit beta from Prosthecochloris aestuarii (strain DSM 271 / SK 413).